The following is a 508-amino-acid chain: Steroid 17-alpha-hydroxylase/17,20 lyase (508 aa).

Asparagine 202 provides a ligand contact to substrate. Cysteine 442 serves as a coordination point for heme.

This sequence belongs to the cytochrome P450 family. It depends on heme as a cofactor.

The protein resides in the endoplasmic reticulum membrane. It localises to the microsome membrane. The catalysed reaction is a C21-steroid + reduced [NADPH--hemoprotein reductase] + O2 = a 17alpha-hydroxy-C21-steroid + oxidized [NADPH--hemoprotein reductase] + H2O + H(+). It catalyses the reaction progesterone + reduced [NADPH--hemoprotein reductase] + O2 = 17alpha-hydroxyprogesterone + oxidized [NADPH--hemoprotein reductase] + H2O + H(+). It carries out the reaction pregnenolone + reduced [NADPH--hemoprotein reductase] + O2 = 17alpha-hydroxypregnenolone + oxidized [NADPH--hemoprotein reductase] + H2O + H(+). The enzyme catalyses 17alpha-hydroxypregnenolone + reduced [NADPH--hemoprotein reductase] + O2 = 3beta-hydroxyandrost-5-en-17-one + acetate + oxidized [NADPH--hemoprotein reductase] + H2O + 2 H(+). The protein operates within steroid hormone biosynthesis. Its pathway is steroid biosynthesis; glucocorticoid biosynthesis. With respect to regulation, regulated predominantly by intracellular cAMP levels. The 17,20-lyase activity is stimulated by cytochrome b5, which acts as an allosteric effector increasing the Vmax of the lyase activity. Functionally, a cytochrome P450 monooxygenase involved in corticoid and androgen biosynthesis. Catalyzes 17-alpha hydroxylation of C21 steroids, which is common for both pathways. A second oxidative step, required only for androgen synthesis, involves an acyl-carbon cleavage. Hydroxylates pregnenolone to form 17-alpha pregnenolone, followed by the cleavage of the C17-C20 bond to form dehydroepiandrosterone (DHEA). Has 17-alpha hydroxylase activity toward progesterone. The 17-alpha hydroxy intermediates, as part of adrenal glucocorticoids biosynthesis pathway, are precursors of cortisol. Mechanistically, uses molecular oxygen inserting one oxygen atom into a substrate, and reducing the second into a water molecule, with two electrons provided by NADPH via cytochrome P450 reductase (CPR; NADPH-ferrihemoprotein reductase). The sequence is that of Steroid 17-alpha-hydroxylase/17,20 lyase (CYP17A1) from Papio hamadryas ursinus (Chacma baboon).